A 442-amino-acid polypeptide reads, in one-letter code: NAD kinase 2, mitochondrial (442 aa).

The N-terminal 62 residues, 1-62 (MTCYRGFLLG…RELAGCGSRA (62 aa)), are a transit peptide targeting the mitochondrion. Residues 24–36 (RGPGAGGPAARPR) are compositionally biased toward low complexity. Residues 24–60 (RGPGAGGPAARPRLGGDGGGRRHLGQGQPRELAGCGS) are disordered. Lys76 is modified (N6-acetyllysine; alternate). Residue Lys76 is modified to N6-succinyllysine; alternate. Ser188 bears the Phosphoserine mark. N6-succinyllysine is present on Lys302. Position 317 is an N6-acetyllysine; alternate (Lys317). Lys317 bears the N6-succinyllysine; alternate mark. A Phosphoserine modification is found at Ser367. At Lys397 the chain carries N6-acetyllysine.

It belongs to the NAD kinase family. As to quaternary structure, homodimer. As to expression, widely expressed.

It is found in the mitochondrion. The catalysed reaction is NAD(+) + ATP = ADP + NADP(+) + H(+). Inhibited by NADH, NADPH and NADP(+). Functionally, mitochondrial NAD(+) kinase that phosphorylates NAD(+) to yield NADP(+). Can use both ATP or inorganic polyphosphate as the phosphoryl donor. Also has weak NADH kinase activity in vitro; however NADH kinase activity is much weaker than the NAD(+) kinase activity and may not be relevant in vivo. The protein is NAD kinase 2, mitochondrial (NADK2) of Homo sapiens (Human).